The primary structure comprises 329 residues: Malate dehydrogenase (329 aa).

An NAD(+)-binding site is contributed by 12–18 (GAAGQIG). The substrate site is built by R95 and R101. NAD(+)-binding positions include N108, Q115, and 132–134 (VGN). Substrate is bound by residues N134 and R165. H190 (proton acceptor) is an active-site residue.

This sequence belongs to the LDH/MDH superfamily. MDH type 2 family.

It carries out the reaction (S)-malate + NAD(+) = oxaloacetate + NADH + H(+). In terms of biological role, catalyzes the reversible oxidation of malate to oxaloacetate. This chain is Malate dehydrogenase, found in Ralstonia nicotianae (strain ATCC BAA-1114 / GMI1000) (Ralstonia solanacearum).